The following is a 360-amino-acid chain: Histidinol-phosphate aminotransferase (360 aa).

The residue at position 221 (Lys-221) is an N6-(pyridoxal phosphate)lysine.

It belongs to the class-II pyridoxal-phosphate-dependent aminotransferase family. Histidinol-phosphate aminotransferase subfamily. As to quaternary structure, homodimer. Requires pyridoxal 5'-phosphate as cofactor.

The enzyme catalyses L-histidinol phosphate + 2-oxoglutarate = 3-(imidazol-4-yl)-2-oxopropyl phosphate + L-glutamate. It participates in amino-acid biosynthesis; L-histidine biosynthesis; L-histidine from 5-phospho-alpha-D-ribose 1-diphosphate: step 7/9. The protein is Histidinol-phosphate aminotransferase of Desulfitobacterium hafniense (strain Y51).